We begin with the raw amino-acid sequence, 358 residues long: MPNKKISVLLVDDSAVVRQVLVAILNDTPDIHVMGAATDPIFAMAKLAQEWPDVIVLDVEMPRMDGITFLKKIMSERPTPVVICSSLTQKGAETSLQALSAGAVEIITKPTTGLKNFLIDSAAELVAAVRAAANSNVKNLGKRMAPPVLAPASKLTADAILPAASGHAMAQTTERIVAIGTSTGGTQALEAVLTALPRVCPGMVIVQHMPEKFTASFAERLNGLSQIEVPEARNNDRILPGLALIAPGGKHMMVTRSGASYYVQVIDGPLVNRHRPSVDVLFRSVAKFAGKNATGIIMTGMGDDGARGLKEMLDAGSSTVAQDEASCVVFGMPKEAIKLNAAQRIMPLQEIHQAILHR.

Residues 7–124 (SVLLVDDSAV…KNFLIDSAAE (118 aa)) form the Response regulatory domain. D58 is subject to 4-aspartylphosphate. Positions 170–358 (AQTTERIVAI…QEIHQAILHR (189 aa)) constitute a CheB-type methylesterase domain. Active-site residues include S182, H208, and D304.

Belongs to the CheB family. Phosphorylated by CheA. Phosphorylation of the N-terminal regulatory domain activates the methylesterase activity.

It localises to the cytoplasm. The catalysed reaction is [protein]-L-glutamate 5-O-methyl ester + H2O = L-glutamyl-[protein] + methanol + H(+). The enzyme catalyses L-glutaminyl-[protein] + H2O = L-glutamyl-[protein] + NH4(+). In terms of biological role, involved in chemotaxis. Part of a chemotaxis signal transduction system that modulates chemotaxis in response to various stimuli. Catalyzes the demethylation of specific methylglutamate residues introduced into the chemoreceptors (methyl-accepting chemotaxis proteins or MCP) by CheR. Also mediates the irreversible deamidation of specific glutamine residues to glutamic acid. The sequence is that of Protein-glutamate methylesterase/protein-glutamine glutaminase 1 from Pseudomonas savastanoi pv. phaseolicola (strain 1448A / Race 6) (Pseudomonas syringae pv. phaseolicola (strain 1448A / Race 6)).